A 606-amino-acid chain; its full sequence is Ectonucleoside triphosphate diphosphohydrolase 7 (606 aa).

At 1–28 the chain is on the cytoplasmic side; it reads MARISFSYLCPASWYFTVPTVSPFLRQR. The helical transmembrane segment at 29–49 threads the bilayer; the sequence is VAFLGLFFIPCVLLLLLIMDL. At 50–548 the chain is on the vesicular side; sequence RHWATSLPRD…PAHGSWLRLS (499 aa). Glutamate 217 serves as the catalytic Proton acceptor. A glycan (N-linked (GlcNAc...) asparagine) is linked at asparagine 330. A disulfide bond links cysteine 448 and cysteine 477. A helical membrane pass occupies residues 549 to 569; sequence FVYNHYLFFACTLVVLLAIVL. At 570–606 the chain is on the cytoplasmic side; the sequence is YLLRIHRIHRRQTRASAPLDLLWIEQVVPMIGVQVGP.

This sequence belongs to the GDA1/CD39 NTPase family. The cofactor is Ca(2+). It depends on Mg(2+) as a cofactor. In terms of tissue distribution, widely expressed. Expressed at high level in brain, kidney, liver, testis and small intestin. Weakly expressed in lung, thymus and heart.

Its subcellular location is the cytoplasmic vesicle membrane. The enzyme catalyses a ribonucleoside 5'-triphosphate + H2O = a ribonucleoside 5'-diphosphate + phosphate + H(+). The catalysed reaction is UTP + H2O = UDP + phosphate + H(+). It catalyses the reaction GTP + H2O = GDP + phosphate + H(+). It carries out the reaction CTP + H2O = CDP + phosphate + H(+). The enzyme catalyses ATP + H2O = ADP + phosphate + H(+). Catalyzes the hydrolysis of nucleoside triphosphates and diphosphates in a calcium- or magnesium-dependent manner. Preferentially hydrolyzes nucleoside 5'-triphosphates, with substrate preference for UTP &gt; GTP &gt; CTP. Hydrolyzes nucleoside diphosphates only to a minor extent. In contrast to its human ortholog is able to hydrolyze ATP. In the epithelial cells of small intestine controls luminal ATP levels, therefore regulating Th17-cell development. In Mus musculus (Mouse), this protein is Ectonucleoside triphosphate diphosphohydrolase 7 (Entpd7).